The chain runs to 481 residues: ATP synthase subunit alpha (481 aa).

145–152 (GDRQTGKT) is an ATP binding site.

This sequence belongs to the ATPase alpha/beta chains family. F-type ATPases have 2 components, CF(1) - the catalytic core - and CF(0) - the membrane proton channel. CF(1) has five subunits: alpha(3), beta(3), gamma(1), delta(1), epsilon(1). CF(0) has three main subunits: a(1), b(2) and c(9-12). The alpha and beta chains form an alternating ring which encloses part of the gamma chain. CF(1) is attached to CF(0) by a central stalk formed by the gamma and epsilon chains, while a peripheral stalk is formed by the delta and b chains.

It is found in the cell membrane. It catalyses the reaction ATP + H2O + 4 H(+)(in) = ADP + phosphate + 5 H(+)(out). Its function is as follows. Produces ATP from ADP in the presence of a proton gradient across the membrane. The alpha chain is a regulatory subunit. The polypeptide is ATP synthase subunit alpha (Carsonella ruddii (strain PV)).